Here is a 713-residue protein sequence, read N- to C-terminus: Probable tRNA (uracil-O(2)-)-methyltransferase (713 aa).

2 disordered regions span residues 49-92 (TLRS…REGT) and 480-508 (LHSR…HDAG). Serine 76 is modified (phosphoserine). Residues 79–89 (GEPESGPRASR) are compositionally biased toward basic and acidic residues. Serine 489 is modified (phosphoserine). A C3H1-type zinc finger spans residues 669–698 (FKTRICWFFAHHPDGCVLPAAQCPFAHGPE).

It belongs to the TRM44 family.

It localises to the cytoplasm. It catalyses the reaction uridine(44) in tRNA(Ser) + S-adenosyl-L-methionine = 2'-O-methyluridine(44) in tRNA(Ser) + S-adenosyl-L-homocysteine + H(+). Its function is as follows. Probable adenosyl-L-methionine (AdoMet)-dependent tRNA (uracil-O(2)-)-methyltransferase. The protein is Probable tRNA (uracil-O(2)-)-methyltransferase (Trmt44) of Mus musculus (Mouse).